Consider the following 291-residue polypeptide: Diaminopimelate epimerase (291 aa).

3 residues coordinate substrate: N13, Q46, and N66. C75 acts as the Proton donor in catalysis. Residues 76–77, N156, N189, and 207–208 contribute to the substrate site; these read GN and ER. The Proton acceptor role is filled by C216. 217–218 lines the substrate pocket; the sequence is GS.

This sequence belongs to the diaminopimelate epimerase family. As to quaternary structure, homodimer.

It localises to the cytoplasm. The enzyme catalyses (2S,6S)-2,6-diaminopimelate = meso-2,6-diaminopimelate. It participates in amino-acid biosynthesis; L-lysine biosynthesis via DAP pathway; DL-2,6-diaminopimelate from LL-2,6-diaminopimelate: step 1/1. Its function is as follows. Catalyzes the stereoinversion of LL-2,6-diaminopimelate (L,L-DAP) to meso-diaminopimelate (meso-DAP), a precursor of L-lysine and an essential component of the bacterial peptidoglycan. The sequence is that of Diaminopimelate epimerase from Rhodospirillum centenum (strain ATCC 51521 / SW).